Reading from the N-terminus, the 427-residue chain is Putative ABC transporter substrate-binding protein YesO (427 aa).

The protein belongs to the bacterial solute-binding protein 1 family.

Functionally, may play a role in the degradation of type I rhamnogalacturonan derived from plant cell walls. This Bacillus subtilis (strain 168) protein is Putative ABC transporter substrate-binding protein YesO (yesO).